The following is a 515-amino-acid chain: MKVVETVARLEAFRRARAPVAGVEMGLVMTMGALHEGHRSLIARARRENTVLVVSIFVNPTQFGSSEDLSRYPRPLEADLELCRHEGVDLVFAPPESELYPLGSGTKVVPDPALTEVMCGLSRPGHFSGVATVVAKVMNLVQPVRAYFGQKDAQQVAVIKSVCCDLNIGGRIVVCPTVHDPDGLALSSRNVYLSSAQRSTALALPRALDKAAHLWAGGERQASELERAVRSVLASEPGLEIEYVAAVDPERLAPRQDNAGPVLVAAAVRVGSTRLIDNVVLGQHHERRPIIAIDGPAGAGKSTLARRLAQRLGFLYIDTGAMYRAVTWRAMQERIDPLDGERLSALTRAVRIRLAPGYQSAFPTRVWVDGEEVTRAVRDEAVSLHVSAVSSHPGVRSELVAQQRRIGEAGGVILDGRDIGTHVFSRAELKIYLTASVEERALRRADDLKAKGLPVPDIEVLKEQIRSRDNQDMSRAYAPLRKADDAIEVNTDTFTVQDTLDRLLALYRDKVGGSV.

Residues 1-279 form a pantoate--beta-alanine ligase region; that stretch reads MKVVETVARL…VGSTRLIDNV (279 aa). 31-38 serves as a coordination point for ATP; the sequence is MGALHEGH. The active-site Proton donor is the His-38. Gln-62 contacts (R)-pantoate. Gln-62 contributes to the beta-alanine binding site. 149 to 152 contributes to the ATP binding site; it reads GQKD. Gln-155 contacts (R)-pantoate. ATP contacts are provided by residues Val-178 and 186 to 189; that span reads LSSR. A cytidylate kinase region spans residues 280–515; the sequence is VLGQHHERRP…LYRDKVGGSV (236 aa).

The protein in the N-terminal section; belongs to the pantothenate synthetase family. In the C-terminal section; belongs to the cytidylate kinase family. Type 1 subfamily.

Its subcellular location is the cytoplasm. It catalyses the reaction (R)-pantoate + beta-alanine + ATP = (R)-pantothenate + AMP + diphosphate + H(+). It carries out the reaction CMP + ATP = CDP + ADP. The catalysed reaction is dCMP + ATP = dCDP + ADP. Its pathway is cofactor biosynthesis; (R)-pantothenate biosynthesis; (R)-pantothenate from (R)-pantoate and beta-alanine: step 1/1. Catalyzes the condensation of pantoate with beta-alanine in an ATP-dependent reaction via a pantoyl-adenylate intermediate. Functionally, catalyzes the transfer of a phosphate group from ATP to either CMP or dCMP to form CDP or dCDP and ADP, respectively. This is Bifunctional pantoate ligase/cytidylate kinase from Gloeobacter violaceus (strain ATCC 29082 / PCC 7421).